The following is a 496-amino-acid chain: Cyclin-L1 (496 aa).

Cyclin-like stretches follow at residues 68 to 170 (ELIQ…RILK) and 183 to 267 (KIIV…TTLR). The tract at residues 301–496 (NPDGTPAILS…SHSGHGRHRR (196 aa)) is disordered. The segment covering 322-347 (SPRDVKTEEKSPNFAKVKREMDDKQS) has biased composition (basic and acidic residues). Basic residues-rich tracts occupy residues 358–392 (ENKRSRSVSRSRSRTKSRSRSHSPRRHYNNRRRSR), 412–426 (RRHHNHGSPHMKLKH), 434–446 (RHAHKRKKSHSPS), and 456–468 (KKHRHEHGHHRER). The RS stretch occupies residues 363 to 406 (RSVSRSRSRTKSRSRSHSPRRHYNNRRRSRSGTYSSRSRSRSRS). Residues 469 to 478 (RERSRSFERS) are compositionally biased toward basic and acidic residues. Positions 479–496 (HKNKHHGSSHSGHGRHRR) are enriched in basic residues.

It belongs to the cyclin family. Cyclin L subfamily.

It localises to the nucleus speckle. It is found in the nucleus. The protein localises to the nucleoplasm. In terms of biological role, involved in pre-mRNA splicing. The protein is Cyclin-L1 (ccnl1) of Xenopus laevis (African clawed frog).